We begin with the raw amino-acid sequence, 128 residues long: MKHKYNTLSWYKKERSTQLRRFIVHQPEVGLFFFLRDVVYNYITEKTTCRCPLTQERPCDTGGKFGRIWICQPEELGKMQIWICQPEELGKMQIDKNRTMVQQMWYIWYGGLDTSTNSLLPILVRGMA.

This is an uncharacterized protein from Homo sapiens (Human).